Reading from the N-terminus, the 365-residue chain is MIVEELKLINYRNYEQMNLKFHPRLNVFIGDNAQGKTNLIESIYLCSAGKSFRTNHDQELINMNKKQAYIHVKVKKVHSDVHIEVRLNSERKKDLKVNQIPLVKMGELLGNLNVVLFSPEDLKLVKEGPSERRRFMDREISQISTKFYYTLSQYNKILQHRNKLLKYNKGKEIDIEVWDEQLAAAGAWLIVYRRNFIKKISILAKLMHRKITESIENLEVIYEPNVKVKENDEVDVIKEKILQNLKENFNVDKQRGLTTCGPHRDDMILKINGLDVKTYGSQGQQRTAVLSLKLAELELVKGEVGEYPILLLDDVMSELDSKRQHYLIHNLKSVQTFITTTMMETLKDLKPEDRAVFYVNKGQID.

Residue 30–37 (GDNAQGKT) coordinates ATP.

This sequence belongs to the RecF family.

The protein localises to the cytoplasm. Its function is as follows. The RecF protein is involved in DNA metabolism; it is required for DNA replication and normal SOS inducibility. RecF binds preferentially to single-stranded, linear DNA. It also seems to bind ATP. This is DNA replication and repair protein RecF from Alkaliphilus oremlandii (strain OhILAs) (Clostridium oremlandii (strain OhILAs)).